An 871-amino-acid polypeptide reads, in one-letter code: Protein argonaute-2 (871 aa).

The 120-residue stretch at 232–351 (PVIEFMCEVL…LPLEVCNIVA (120 aa)) folds into the PAZ domain. Interaction with guide RNA regions lie at residues 314-319 (YFKDRH) and 536-578 (GKTP…LCLK). A Piwi domain is found at 529 to 830 (LVVVILPGKT…VAFRARYHLV (302 aa)). The segment at 599–602 (FQQP) is interaction with GW182 family members. An a divalent metal cation-binding site is contributed by D609. An interaction with GW182 family members region spans residues 662–672 (LIQFYKSTRFK). A divalent metal cation is bound at residue D681. 3 interaction with guide RNA regions span residues 721–722 (KR), 765–773 (HAGIQGTSR), and 802–824 (YVRCTRSVSIPAPAYYAHLVAFR). H819 contributes to the a divalent metal cation binding site. The tract at residues 834 to 856 (HDSAEGSHTSGQSNGRDQQALAK) is disordered. Residues 839 to 850 (GSHTSGQSNGRD) show a composition bias toward polar residues.

This sequence belongs to the argonaute family. Ago subfamily. Component of the RISC loading complex (RLC), or micro-RNA (miRNA) loading complex (miRLC), which is composed of dicer1, ago2 and tarbp2. Note that the trimeric RLC/miRLC is also referred to as RISC. Mg(2+) serves as cofactor. Mn(2+) is required as a cofactor.

It is found in the cytoplasm. Its subcellular location is the P-body. The enzyme catalyses Endonucleolytic cleavage to 5'-phosphomonoester.. Its function is as follows. Required for RNA-mediated gene silencing (RNAi) by the RNA-induced silencing complex (RISC). The 'minimal RISC' appears to include ago2 bound to a short guide RNA such as a microRNA (miRNA) or short interfering RNA (siRNA). These guide RNAs direct RISC to complementary mRNAs that are targets for RISC-mediated gene silencing. The precise mechanism of gene silencing depends on the degree of complementarity between the miRNA or siRNA and its target. Binding of RISC to a perfectly complementary mRNA generally results in silencing due to endonucleolytic cleavage of the mRNA specifically by ago2. Binding of RISC to a partially complementary mRNA results in silencing through inhibition of translation, and this is independent of endonuclease activity. The inhibition of translational initiation leads to the accumulation of the affected mRNA in cytoplasmic processing bodies (P-bodies), where mRNA degradation may subsequently occur. This is Protein argonaute-2 (ago2) from Xenopus tropicalis (Western clawed frog).